The primary structure comprises 82 residues: Beta-defensin 113 (82 aa).

The N-terminal stretch at 1-16 (MKILCIFLTFVFTVSC) is a signal peptide. 3 cysteine pairs are disulfide-bonded: Cys-35–Cys-61, Cys-42–Cys-56, and Cys-46–Cys-62.

The protein belongs to the beta-defensin family.

The protein localises to the secreted. Its function is as follows. Has antibacterial activity. This Homo sapiens (Human) protein is Beta-defensin 113 (DEFB113).